The sequence spans 423 residues: Large ribosomal subunit protein mL37 (423 aa).

The transit peptide at 1 to 29 (MALASGPARRVLARPWGLGLEGCGVPRRG) directs the protein to the mitochondrion.

Belongs to the mitochondrion-specific ribosomal protein mL37 family. Component of the mitochondrial ribosome large subunit (39S) which comprises a 16S rRNA and about 50 distinct proteins.

Its subcellular location is the mitochondrion. This is Large ribosomal subunit protein mL37 (MRPL37) from Bos taurus (Bovine).